The following is a 249-amino-acid chain: Triosephosphate isomerase (249 aa).

9–11 (NWK) contacts substrate. Histidine 95 (electrophile) is an active-site residue. Glutamate 165 acts as the Proton acceptor in catalysis. Substrate-binding positions include glycine 171, serine 211, and 232-233 (GG).

Belongs to the triosephosphate isomerase family. Homodimer.

Its subcellular location is the cytoplasm. It catalyses the reaction D-glyceraldehyde 3-phosphate = dihydroxyacetone phosphate. It participates in carbohydrate biosynthesis; gluconeogenesis. Its pathway is carbohydrate degradation; glycolysis; D-glyceraldehyde 3-phosphate from glycerone phosphate: step 1/1. Involved in the gluconeogenesis. Catalyzes stereospecifically the conversion of dihydroxyacetone phosphate (DHAP) to D-glyceraldehyde-3-phosphate (G3P). In Chlorobium phaeobacteroides (strain DSM 266 / SMG 266 / 2430), this protein is Triosephosphate isomerase.